The chain runs to 444 residues: Tubulin beta-8 chain (444 aa).

The MREI motif motif lies at 1–4; it reads MREI. GTP contacts are provided by Q11, E69, S138, G142, T143, and G144. E69 contacts Mg(2+). S172 carries the post-translational modification Phosphoserine; by CDK1. GTP-binding residues include N204 and N226. A disordered region spans residues 423 to 444; that stretch reads QQYQDATAEEEEDEEYAEEEVA. Acidic residues predominate over residues 429–444; that stretch reads TAEEEEDEEYAEEEVA. Residue E436 is modified to 5-glutamyl polyglutamate.

Belongs to the tubulin family. As to quaternary structure, dimer of alpha and beta chains. A typical microtubule is a hollow water-filled tube with an outer diameter of 25 nm and an inner diameter of 15 nM. Alpha-beta heterodimers associate head-to-tail to form protofilaments running lengthwise along the microtubule wall with the beta-tubulin subunit facing the microtubule plus end conferring a structural polarity. Microtubules usually have 13 protofilaments but different protofilament numbers can be found in some organisms and specialized cells. Mg(2+) serves as cofactor. Some glutamate residues at the C-terminus are polyglutamylated, resulting in polyglutamate chains on the gamma-carboxyl group. Polyglutamylation plays a key role in microtubule severing by spastin (SPAST). SPAST preferentially recognizes and acts on microtubules decorated with short polyglutamate tails: severing activity by SPAST increases as the number of glutamates per tubulin rises from one to eight, but decreases beyond this glutamylation threshold. Glutamylation is also involved in cilia motility. In terms of processing, some glutamate residues at the C-terminus are monoglycylated but not polyglycylated due to the absence of functional TTLL10 in human. Monoglycylation is mainly limited to tubulin incorporated into cilia and flagella axonemes, which is required for their stability and maintenance. Flagella glycylation controls sperm motility. Both polyglutamylation and monoglycylation can coexist on the same protein on adjacent residues, and lowering glycylation levels increases polyglutamylation, and reciprocally. Post-translationally, phosphorylated on Ser-172 by CDK1 during the cell cycle, from metaphase to telophase, but not in interphase. This phosphorylation inhibits tubulin incorporation into microtubules. Expressed at a high level in oocytes, at different stages of development.

It is found in the cytoplasm. The protein resides in the cytoskeleton. It localises to the spindle. Tubulin is the major constituent of microtubules, a cylinder consisting of laterally associated linear protofilaments composed of alpha- and beta-tubulin heterodimers. Microtubules grow by the addition of GTP-tubulin dimers to the microtubule end, where a stabilizing cap forms. Below the cap, tubulin dimers are in GDP-bound state, owing to GTPase activity of alpha-tubulin. TUBB8 has a key role in meiotic spindle assembly and oocyte maturation. This is Tubulin beta-8 chain from Homo sapiens (Human).